A 771-amino-acid chain; its full sequence is 5-methyltetrahydropteroyltriglutamate--homocysteine methyltransferase (771 aa).

5-methyltetrahydropteroyltri-L-glutamate is bound by residues arginine 13 to lysine 16 and lysine 128. L-homocysteine-binding positions include isoleucine 451–serine 453 and glutamate 504. Residues isoleucine 451–serine 453 and glutamate 504 contribute to the L-methionine site. Residues arginine 535–cysteine 536 and tryptophan 581 contribute to the 5-methyltetrahydropteroyltri-L-glutamate site. Aspartate 619 contacts L-homocysteine. Aspartate 619 serves as a coordination point for L-methionine. Residue glutamate 625 participates in 5-methyltetrahydropteroyltri-L-glutamate binding. Zn(2+)-binding residues include histidine 661, cysteine 663, and glutamate 685. The active-site Proton donor is the histidine 714. Cysteine 746 is a binding site for Zn(2+).

This sequence belongs to the vitamin-B12 independent methionine synthase family. The cofactor is Zn(2+).

The enzyme catalyses 5-methyltetrahydropteroyltri-L-glutamate + L-homocysteine = tetrahydropteroyltri-L-glutamate + L-methionine. It participates in amino-acid biosynthesis; L-methionine biosynthesis via de novo pathway; L-methionine from L-homocysteine (MetE route): step 1/1. Catalyzes the transfer of a methyl group from 5-methyltetrahydrofolate to homocysteine resulting in methionine formation. In Nitrobacter winogradskyi (strain ATCC 25391 / DSM 10237 / CIP 104748 / NCIMB 11846 / Nb-255), this protein is 5-methyltetrahydropteroyltriglutamate--homocysteine methyltransferase.